We begin with the raw amino-acid sequence, 809 residues long: Ribonuclease Z 1 (809 aa).

The interval 74 to 93 (ISSPDTYDSSSSSSTTSVSD) is disordered.

It belongs to the RNase Z family. The cofactor is Zn(2+).

The protein resides in the nucleus. Its subcellular location is the cytoplasm. It catalyses the reaction Endonucleolytic cleavage of RNA, removing extra 3' nucleotides from tRNA precursor, generating 3' termini of tRNAs. A 3'-hydroxy group is left at the tRNA terminus and a 5'-phosphoryl group is left at the trailer molecule.. Its function is as follows. Zinc phosphodiesterase, which displays some tRNA 3'-processing endonuclease activity. May be involved in tRNA maturation, by removing a 3'-trailer from precursor tRNA. The protein is Ribonuclease Z 1 (trz1) of Schizosaccharomyces pombe (strain 972 / ATCC 24843) (Fission yeast).